A 259-amino-acid polypeptide reads, in one-letter code: MTNNYINSPLDQFIINNLLEINSPFLNLSTLNFSTFSLYTLFVVLVISLTFILSIGGESNNLVKGSNWLIAIEAIFDTILNMVKGQIGGSVYGRYVPLVYTLFTFILVANLIGMVPYNFALSASLIYIIGISVSLWIGLTILGLFLNKAVFFSLFVPSGTPLPLVPVLVLIELLSYTARAISLGLRLAANTLSGHLLMSILGNLVKNLMSINYFTFIFGLIPLAGIFAIVILEFAIACIQAYVFAILTSSYLKDSIYLH.

Positions 1–7 are cleaved as a propeptide — removed in mature form; that stretch reads MTNNYIN. The next 5 helical transmembrane spans lie at 36-56, 95-115, 125-145, 164-206, and 211-253; these read FSLY…LSIG, YVPL…IGMV, LIYI…LGLF, LVPV…NLVK, and INYF…SYLK.

F-type ATP synthases have 2 components, the catalytic core F(1) and the membrane-embedded component F(0), linked together by a central stalk and a peripheral stalk. The central stalk, also called rotor shaft, is often seen as part of F(1). The peripheral stalk is seen as part of F(0). F(0) contains the membrane channel next to the rotor. F-type ATP synthases form dimers but each monomer functions independently in ATP generation. The dimer consists of 18 different polypeptides: ATP1 (subunit alpha, part of F(1), 3 molecules per monomer), ATP2 (subunit beta, part of F(1), 3 molecules per monomer), ATP3 (subunit gamma, part of the central stalk), ATP4 (subunit b, part of the peripheral stalk), ATP5/OSCP (subunit 5/OSCP, part of the peripheral stalk), ATP6 (subunit a, part of the peripheral stalk), ATP7 (subunit d, part of the peripheral stalk), ATP8 (subunit 8, part of the peripheral stalk), OLI1 (subunit c, part of the rotor, 10 molecules per monomer), ATP14 (subunit h, part of the peripheral stalk), ATP15 (subunit epsilon, part of the central stalk), ATP16 (subunit delta, part of the central stalk), ATP17 (subunit f, part of the peripheral stalk), ATP18 (subunit i/j, part of the peripheral stalk). Dimer-specific subunits are ATP19 (subunit k, at interface between monomers), ATP20 (subunit g, at interface between monomers), TIM11 (subunit e, at interface between monomers). Also contains subunit L.

It is found in the mitochondrion inner membrane. In terms of biological role, mitochondrial membrane ATP synthase (F(1)F(0) ATP synthase or Complex V) produces ATP from ADP in the presence of a proton gradient across the membrane which is generated by electron transport complexes of the respiratory chain. F-type ATP synthases consist of two structural domains, F(1) - containing the extramembraneous catalytic core, and F(0) - containing the membrane proton channel, linked together by a central stalk and a peripheral stalk. During catalysis, ATP synthesis in the catalytic domain of F(1) is coupled via a rotary mechanism of the central stalk subunits to proton translocation. Key component of the proton channel; it may play a direct role in the translocation of protons across the membrane. The protein is ATP synthase subunit a of Pichia angusta (Yeast).